The primary structure comprises 245 residues: Flavin-dependent thymidylate synthase (245 aa).

One can recognise a ThyX domain in the interval 5–210; it reads IRVKLVNYTK…ELRPIIKWAK (206 aa). Residues Ser59, 83-85, and Gln91 each bind FAD; that span reads RHR. DUMP-binding positions include 80 to 83, 91 to 95, and Arg149; these read QLVR and QQSQR. The ThyX motif signature appears at 83-93; the sequence is RHRLASYTQQS. Residues 165-167 and His171 each bind FAD; that span reads NLR. Arg176 contributes to the dUMP binding site. The Involved in ionization of N3 of dUMP, leading to its activation role is filled by Arg176.

It belongs to the thymidylate synthase ThyX family. As to quaternary structure, homotetramer. The cofactor is FAD.

The enzyme catalyses dUMP + (6R)-5,10-methylene-5,6,7,8-tetrahydrofolate + NADPH + H(+) = dTMP + (6S)-5,6,7,8-tetrahydrofolate + NADP(+). Its pathway is pyrimidine metabolism; dTTP biosynthesis. Functionally, catalyzes the reductive methylation of 2'-deoxyuridine-5'-monophosphate (dUMP) to 2'-deoxythymidine-5'-monophosphate (dTMP) while utilizing 5,10-methylenetetrahydrofolate (mTHF) as the methyl donor, and NADPH and FADH(2) as the reductant. The sequence is that of Flavin-dependent thymidylate synthase from Thermococcus kodakarensis (strain ATCC BAA-918 / JCM 12380 / KOD1) (Pyrococcus kodakaraensis (strain KOD1)).